The primary structure comprises 511 residues: Limonoid UDP-glucosyltransferase (511 aa).

H19 functions as the Proton acceptor in the catalytic mechanism. Residue H19 coordinates an anthocyanidin. UDP-alpha-D-glucose contacts are provided by Q344, H359, W362, N363, S364, and E367. G382 is a binding site for an anthocyanidin. UDP-alpha-D-glucose is bound by residues D383 and Q384.

It belongs to the UDP-glycosyltransferase family.

The catalysed reaction is limonin + UDP-alpha-D-glucose + H2O = limonin 17-beta-D-glucoside + UDP + 2 H(+). Functionally, involved in the glucosylation of limonoids. This chain is Limonoid UDP-glucosyltransferase, found in Citrus unshiu (Satsuma mandarin).